The primary structure comprises 404 residues: Alkane 1-monooxygenase 1 (404 aa).

Transmembrane regions (helical) follow at residues 25 to 45 (HLWILSVLWPATPIIGLYLVS), 47 to 67 (TGWSIWYGLVLILWYGLVPLI), 94 to 114 (VLTYLTVPIHYAALIISAWWV), and 119 to 139 (IGVFEFLALALSLGIVNGLAL). Positions 143 and 147 each coordinate Fe cation. The chain crosses the membrane as a helical span at residues 151-171 (TFDRWMAKLVLAVVGYGHFFI). His173, His177, and His178 together coordinate Fe cation. The helical transmembrane segment at 241–261 (VVLYAALLAFFGPLMLIFLPI) threads the bilayer. Positions 317, 320, and 321 each coordinate Fe cation.

Belongs to the fatty acid desaturase type 1 family. AlkB subfamily. It depends on Fe(3+) as a cofactor.

It is found in the cell inner membrane. The enzyme catalyses octane + 2 reduced [rubredoxin] + O2 + 2 H(+) = 2 oxidized [rubredoxin] + octan-1-ol + H2O. It participates in hydrocarbon metabolism; alkane degradation. Its function is as follows. Catalyzes the hydroxylation of n-alkanes and fatty acids in the presence of a NADH-rubredoxin reductase and rubredoxin. It preferably hydroxylases C5-C12 hydrocarbons. The chain is Alkane 1-monooxygenase 1 (alkB1) from Alcanivorax borkumensis (strain ATCC 700651 / DSM 11573 / NCIMB 13689 / SK2).